The following is a 270-amino-acid chain: Phosphatidylglycerol--prolipoprotein diacylglyceryl transferase (270 aa).

The next 7 helical transmembrane spans lie at 14-34 (VIFEIGPIGLRWYGLMYLLGF), 60-80 (LLFNGFMGVFLGGRIGYVLFY), 95-115 (VWEGGMSFHGGLIGVILAMLI), 128-148 (ADFVAPLIPFGLGMGRIGNFI), 176-196 (SQLYEAVLEGIVLFFILNWYI), 202-222 (IGATAGLFLLGYGIFRFIVEF), and 238-258 (ISMGQILSTPMILIGAVIMLV). A 1,2-diacyl-sn-glycero-3-phospho-(1'-sn-glycerol) is bound at residue Arg-143.

This sequence belongs to the Lgt family.

The protein localises to the cell inner membrane. The catalysed reaction is L-cysteinyl-[prolipoprotein] + a 1,2-diacyl-sn-glycero-3-phospho-(1'-sn-glycerol) = an S-1,2-diacyl-sn-glyceryl-L-cysteinyl-[prolipoprotein] + sn-glycerol 1-phosphate + H(+). Its pathway is protein modification; lipoprotein biosynthesis (diacylglyceryl transfer). Catalyzes the transfer of the diacylglyceryl group from phosphatidylglycerol to the sulfhydryl group of the N-terminal cysteine of a prolipoprotein, the first step in the formation of mature lipoproteins. This Pasteurella multocida (strain Pm70) protein is Phosphatidylglycerol--prolipoprotein diacylglyceryl transferase.